Consider the following 245-residue polypeptide: Transmembrane protein 116 (245 aa).

The next 4 helical transmembrane spans lie at 24 to 44 (MAFV…FCLG), 88 to 108 (GIAI…VLLI), 141 to 161 (FYPV…IIKL), and 173 to 195 (LYVL…YGWT).

The protein localises to the membrane. The sequence is that of Transmembrane protein 116 (TMEM116) from Homo sapiens (Human).